A 39-amino-acid chain; its full sequence is Natriuretic peptide CnNP-a (39 aa).

Residues 1–8 constitute a propeptide that is removed on maturation; that stretch reads SGSKTAKI. A disulfide bond links Cys-12 and Cys-28.

Belongs to the natriuretic peptide family. In terms of tissue distribution, expressed by the venom gland.

It localises to the secreted. In terms of biological role, snake venom natriuretic peptide that targets both NPR1 and NPR2. Exhibits hypotensive and vasodepressor activities. This Cryptophis nigrescens (Eastern small-eyed snake) protein is Natriuretic peptide CnNP-a.